Consider the following 356-residue polypeptide: tRNA-specific 2-thiouridylase MnmA 2 (356 aa).

ATP-binding positions include 8–15 (GMSGGVDS) and Met34. The active-site Nucleophile is the Cys103. The cysteines at positions 103 and 199 are disulfide-linked. Gly127 serves as a coordination point for ATP. The interval 149 to 151 (KDQ) is interaction with tRNA. Cys199 acts as the Cysteine persulfide intermediate in catalysis. The interaction with tRNA stretch occupies residues 305 to 306 (RY).

This sequence belongs to the MnmA/TRMU family.

It localises to the cytoplasm. The catalysed reaction is S-sulfanyl-L-cysteinyl-[protein] + uridine(34) in tRNA + AH2 + ATP = 2-thiouridine(34) in tRNA + L-cysteinyl-[protein] + A + AMP + diphosphate + H(+). In terms of biological role, catalyzes the 2-thiolation of uridine at the wobble position (U34) of tRNA, leading to the formation of s(2)U34. The protein is tRNA-specific 2-thiouridylase MnmA 2 of Clostridium botulinum (strain Okra / Type B1).